A 264-amino-acid chain; its full sequence is uncharacterized protein (264 aa).

Transmembrane regions (helical) follow at residues 48-68, 112-132, and 142-162; these read LTIT…LLVF, ITPS…FLLA, and LPIA…SYLI. Phosphoserine is present on Ser-260.

The protein localises to the membrane. This is an uncharacterized protein from Schizosaccharomyces pombe (strain 972 / ATCC 24843) (Fission yeast).